The primary structure comprises 177 residues: Probable DNA-directed RNA polymerase subunit delta (177 aa).

An HTH HARE-type domain is found at 14-81 (CSMIEVVHSV…GENRWGLRSW (68 aa)). The tract at residues 90–177 (EILPQPKPKK…ETEEEEEEEL (88 aa)) is disordered. The segment covering 106 to 177 (DGFDDYIEED…ETEEEEEEEL (72 aa)) has biased composition (acidic residues).

Belongs to the RpoE family. In terms of assembly, RNAP is composed of a core of 2 alpha, a beta and a beta' subunits. The core is associated with a delta subunit and one of several sigma factors.

In terms of biological role, participates in both the initiation and recycling phases of transcription. In the presence of the delta subunit, RNAP displays an increased specificity of transcription, a decreased affinity for nucleic acids, and an increased efficiency of RNA synthesis because of enhanced recycling. The protein is Probable DNA-directed RNA polymerase subunit delta of Bacillus cereus (strain B4264).